Reading from the N-terminus, the 496-residue chain is Probable cytosol aminopeptidase (496 aa).

Residues Lys-266 and Asp-271 each coordinate Mn(2+). Lys-278 is a catalytic residue. Residues Asp-289, Asp-348, and Glu-350 each contribute to the Mn(2+) site. The active site involves Arg-352.

Belongs to the peptidase M17 family. Mn(2+) is required as a cofactor.

It is found in the cytoplasm. The catalysed reaction is Release of an N-terminal amino acid, Xaa-|-Yaa-, in which Xaa is preferably Leu, but may be other amino acids including Pro although not Arg or Lys, and Yaa may be Pro. Amino acid amides and methyl esters are also readily hydrolyzed, but rates on arylamides are exceedingly low.. The enzyme catalyses Release of an N-terminal amino acid, preferentially leucine, but not glutamic or aspartic acids.. In terms of biological role, presumably involved in the processing and regular turnover of intracellular proteins. Catalyzes the removal of unsubstituted N-terminal amino acids from various peptides. This is Probable cytosol aminopeptidase from Pseudomonas syringae pv. tomato (strain ATCC BAA-871 / DC3000).